The following is a 185-amino-acid chain: Ribosome-recycling factor (185 aa).

This sequence belongs to the RRF family.

It localises to the cytoplasm. In terms of biological role, responsible for the release of ribosomes from messenger RNA at the termination of protein biosynthesis. May increase the efficiency of translation by recycling ribosomes from one round of translation to another. This is Ribosome-recycling factor from Coxiella burnetii (strain RSA 493 / Nine Mile phase I).